Here is a 434-residue protein sequence, read N- to C-terminus: Trigger factor (434 aa).

The PPIase FKBP-type domain maps to 161–246 (EDRATLDFTG…LKKVEVRELP (86 aa)).

The protein belongs to the FKBP-type PPIase family. Tig subfamily.

It localises to the cytoplasm. It catalyses the reaction [protein]-peptidylproline (omega=180) = [protein]-peptidylproline (omega=0). Its function is as follows. Involved in protein export. Acts as a chaperone by maintaining the newly synthesized protein in an open conformation. Functions as a peptidyl-prolyl cis-trans isomerase. The chain is Trigger factor from Yersinia pseudotuberculosis serotype O:1b (strain IP 31758).